A 209-amino-acid polypeptide reads, in one-letter code: uncharacterized protein (209 aa).

Residues 1-67 (MEILPKYKPE…LIMYNYWTID (67 aa)) form the MPN domain. Positions 17, 19, and 30 each coordinate Zn(2+). Residues 17–30 (HTHPKGPAEPSIND) carry the JAMM motif motif.

This is an uncharacterized protein from Acidianus convivator (ATV).